A 125-amino-acid polypeptide reads, in one-letter code: Large ribosomal subunit protein bL12 (125 aa).

It belongs to the bacterial ribosomal protein bL12 family. Homodimer. Part of the ribosomal stalk of the 50S ribosomal subunit. Forms a multimeric L10(L12)X complex, where L10 forms an elongated spine to which 2 to 4 L12 dimers bind in a sequential fashion. Binds GTP-bound translation factors.

In terms of biological role, forms part of the ribosomal stalk which helps the ribosome interact with GTP-bound translation factors. Is thus essential for accurate translation. The polypeptide is Large ribosomal subunit protein bL12 (Coprothermobacter proteolyticus (strain ATCC 35245 / DSM 5265 / OCM 4 / BT)).